Here is an 88-residue protein sequence, read N- to C-terminus: Protein U62 (88 aa).

The chain is Protein U62 from Elephantid herpesvirus 1 (isolate Asian elephant/Berlin/Kiba/1998) (EIHV-1).